Reading from the N-terminus, the 446-residue chain is C4-dicarboxylate transport protein 2 (446 aa).

10 consecutive transmembrane segments (helical) span residues 7 to 26, 46 to 64, 77 to 99, 152 to 171, 192 to 211, 221 to 243, 291 to 313, 318 to 340, 353 to 375, and 381 to 403; these read PLFG…GIWA, MLIA…CGAG, VIYF…YAFG, ILQV…LLGE, AVVI…FTVG, LGFL…LGGI, VVGL…YLTL, IAQA…VALI, IVIL…VLVL, and IGIA…IAAW.

The protein belongs to the dicarboxylate/amino acid:cation symporter (DAACS) (TC 2.A.23) family.

It is found in the cell inner membrane. Responsible for the transport of dicarboxylates such as succinate, fumarate, and malate from the periplasm across the membrane. This chain is C4-dicarboxylate transport protein 2 (dctA2), found in Ralstonia nicotianae (strain ATCC BAA-1114 / GMI1000) (Ralstonia solanacearum).